A 1132-amino-acid polypeptide reads, in one-letter code: DNA topoisomerase 2 (1132 aa).

ATP is bound by residues N68, N100, 137 to 139 (SSN), and 150 to 157 (GKNGLGVK). Residues 327 to 329 (NKP) are interaction with DNA. 363-365 (QNK) serves as a coordination point for ATP. Residues 442 to 577 (CTLIVCEGLS…NLKDFPFISS (136 aa)) form the Toprim domain. Mg(2+) is bound by residues E448, D538, and D540. The region spanning 713–1125 (LPHLIDGLKE…NEGQMWLKDI (413 aa)) is the Topo IIA-type catalytic domain. The O-(5'-phospho-DNA)-tyrosine intermediate role is filled by Y803. Residues 979–988 (KLRSYIHTSN) form an interaction with DNA region.

The protein belongs to the type II topoisomerase family. The cofactor is Mg(2+). Requires Mn(2+) as cofactor. Ca(2+) is required as a cofactor.

The enzyme catalyses ATP-dependent breakage, passage and rejoining of double-stranded DNA.. Functionally, can introduce negative superhelical turns into double-stranded circular DNA. In Acheta domesticus (House cricket), this protein is DNA topoisomerase 2 (TOP2).